The primary structure comprises 178 residues: Caveolin-1 (178 aa).

Ser2 carries the N-acetylserine modification. The residue at position 2 (Ser2) is a Phosphoserine. A required for homooligomerization region spans residues 2-94; the sequence is SGGKYVDSEG…WKASFTTFTV (93 aa). At 2-104 the chain is on the cytoplasmic side; the sequence is SGGKYVDSEG…TKYWFYRLLS (103 aa). N6-acetyllysine; alternate is present on Lys5. Lys5 participates in a covalent cross-link: Glycyl lysine isopeptide (Lys-Gly) (interchain with G-Cter in ubiquitin); alternate. A Phosphotyrosine modification is found at Tyr6. Ser9 bears the Phosphoserine mark. Tyr14 bears the Phosphotyrosine; by ABL1 mark. Position 25 is a phosphotyrosine (Tyr25). Glycyl lysine isopeptide (Lys-Gly) (interchain with G-Cter in ubiquitin) cross-links involve residues Lys26 and Lys30. Ser37 carries the post-translational modification Phosphoserine. Glycyl lysine isopeptide (Lys-Gly) (interchain with G-Cter in ubiquitin) cross-links involve residues Lys39, Lys47, and Lys57. Positions 82–94 are interaction with CAVIN3; that stretch reads DGIWKASFTTFTV. Positions 105–125 form an intramembrane region, helical; the sequence is ALFGIPMALIWGIYFAILSFL. Residues 126–178 lie on the Cytoplasmic side of the membrane; it reads HIWAVVPCIKSFLIEIQCISRVYSIYIHTVCDPLFEAIGKIFSNVRISLQKEI. The segment at 131-142 is interacts with SPRY1, SPRY2, SPRY3 and SPRY4; that stretch reads VPCIKSFLIEIQ. S-palmitoyl cysteine attachment occurs at residues Cys133, Cys143, and Cys156. Residues 149–160 are interacts with SPRY1, SPRY2, and SPRY4; sequence SIYIHTVCDPLF. Positions 167–178 are interacts with SPRY1, SPRY2, SPRY3 and SPRY4; that stretch reads FSNVRISLQKEI.

The protein belongs to the caveolin family. In terms of assembly, homooligomer. Interacts with GLIPR2. Interacts with NOSTRIN. Interacts with SNAP25 and STX1A. Interacts (via the N-terminus) with DPP4; the interaction is direct. Interacts with CTNNB1, CDH1 and JUP. Interacts with PACSIN2; this interaction induces membrane tubulation. Interacts with SLC7A9. Interacts with BMX and BTK. Interacts with TGFBR1. Interacts with CAVIN3 (via leucine-zipper domain) in a cholesterol-sensitive manner. Interacts with CAVIN1. Interacts with EHD2 in a cholesterol-dependent manner. Forms a ternary complex with UBXN6 and VCP; mediates CAV1 targeting to lysosomes for degradation. Interacts with ABCG1; this interaction regulates ABCG1-mediated cholesterol efflux. Interacts with NEU3; this interaction enhances NEU3 sialidase activity within caveola. Interacts (via C-terminus) with SPRY1, SPRY2 (via C-terminus), SPRY3, and SPRY4. Interacts with IGFBP5; this interaction allows trafficking of IGFBP5 from the plasma membrane to the nucleus. In terms of processing, phosphorylated at Tyr-14 by ABL1 in response to oxidative stress. Post-translationally, ubiquitinated. Undergo monoubiquitination and multi- and/or polyubiquitination. Monoubiquitination of N-terminal lysines promotes integration in a ternary complex with UBXN6 and VCP which promotes oligomeric CAV1 targeting to lysosomes for degradation. Ubiquitinated by ZNRF1; leading to degradation and modulation of the TLR4-mediated immune response.

The protein localises to the golgi apparatus membrane. It localises to the cell membrane. Its subcellular location is the membrane. It is found in the caveola. The protein resides in the membrane raft. May act as a scaffolding protein within caveolar membranes. Forms a stable heterooligomeric complex with CAV2 that targets to lipid rafts and drives caveolae formation. Mediates the recruitment of CAVIN proteins (CAVIN1/2/3/4) to the caveolae. Interacts directly with G-protein alpha subunits and can functionally regulate their activity. Involved in the costimulatory signal essential for T-cell receptor (TCR)-mediated T-cell activation. Its binding to DPP4 induces T-cell proliferation and NF-kappa-B activation in a T-cell receptor/CD3-dependent manner. Recruits CTNNB1 to caveolar membranes and may regulate CTNNB1-mediated signaling through the Wnt pathway. Negatively regulates TGFB1-mediated activation of SMAD2/3 by mediating the internalization of TGFBR1 from membrane rafts leading to its subsequent degradation. Binds 20(S)-hydroxycholesterol (20(S)-OHC). The protein is Caveolin-1 (CAV1) of Aotus nancymaae (Ma's night monkey).